The following is a 409-amino-acid chain: Sulfide-quinone reductase (409 aa).

FAD-binding positions include 8–12 (GGRFG), 34–35 (NK), and Cys129. Cys178 (cysteine persulfide intermediate) is an active-site residue. Positions 271, 307, and 317 each coordinate FAD. Cys350 (cysteine persulfide intermediate) is an active-site residue.

The protein belongs to the SQRD family. As to quaternary structure, monomer. FAD is required as a cofactor.

It is found in the membrane. It catalyses the reaction n a quinone + n hydrogen sulfide + n H(+) = polysulfur(n-2) + n a quinol. Inhibited by the quinone analog 2-heptyl-4-hydroxyquinolone N-oxide (HQNO). Inactivated by iodoacetamide treatment. Inhibited by KCN. Catalyzes the oxidation of sulfides, such as hydrogen sulfide, with the help of a quinone. Has the highest activity with caldariella quinone and decylubiquinone, and lower activity with naphtoquinones. Consecutive reaction cycles lead to the accumulation of a polysulfide product on the active site Cys residues; these products are released when they exceed a critical length, typically as cyclooctasulfur. The polypeptide is Sulfide-quinone reductase (Acidianus ambivalens (Desulfurolobus ambivalens)).